A 105-amino-acid chain; its full sequence is NADH-quinone oxidoreductase subunit K (105 aa).

3 consecutive transmembrane segments (helical) span residues 4–24 (LTHYLILSGVLFAIGLMGVIV), 28–48 (IIVIFMCLEMMLSAANLSLVA), and 66–86 (LSIFILTIAAAEVAIGLALIV).

This sequence belongs to the complex I subunit 4L family. NDH-1 is composed of 14 different subunits. Subunits NuoA, H, J, K, L, M, N constitute the membrane sector of the complex.

The protein resides in the cell inner membrane. The catalysed reaction is a quinone + NADH + 5 H(+)(in) = a quinol + NAD(+) + 4 H(+)(out). NDH-1 shuttles electrons from NADH, via FMN and iron-sulfur (Fe-S) centers, to quinones in the respiratory chain. The immediate electron acceptor for the enzyme in this species is believed to be ubiquinone. Couples the redox reaction to proton translocation (for every two electrons transferred, four hydrogen ions are translocated across the cytoplasmic membrane), and thus conserves the redox energy in a proton gradient. In Akkermansia muciniphila (strain ATCC BAA-835 / DSM 22959 / JCM 33894 / BCRC 81048 / CCUG 64013 / CIP 107961 / Muc), this protein is NADH-quinone oxidoreductase subunit K.